A 382-amino-acid polypeptide reads, in one-letter code: Alkanesulfonate monooxygenase (382 aa).

It belongs to the SsuD family. Homotetramer.

It catalyses the reaction an alkanesulfonate + FMNH2 + O2 = an aldehyde + FMN + sulfite + H2O + 2 H(+). Functionally, catalyzes the desulfonation of aliphatic sulfonates. In Yersinia pseudotuberculosis serotype IB (strain PB1/+), this protein is Alkanesulfonate monooxygenase.